The sequence spans 44 residues: Poly-ADP-ribosylation-amplifying and CtIP-maintaining micropeptide (44 aa).

Residues 1–44 (MAASGGTKKAQSGGRRLREPSSRPSRRARQRPRRGALRKAGRFL) form a disordered region. A compositionally biased stretch (basic residues) spans 24 to 44 (PSRRARQRPRRGALRKAGRFL).

In terms of assembly, interacts with KLHL15; preventing ubiquitination and degradation of RBBP8/CtIP. Interacts with PARP1.

It localises to the nucleus. The protein resides in the nucleolus. It is found in the chromosome. Functionally, micropeptide that acts as a regulator of DNA repair both by preventing KLHL15-mediated ubiquitination and degradation of RBBP8/CtIP, and by promoting the poly-ADP-ribosyltransferase activity of PARP1. Prevents KLHL15-mediated ubiquitination of RBBP8/CtIP by competitively blocking the association between KLHL15 and RBBP8/CtIP. Recruited to DNA damage sites via association with poly-ADP-ribose chains, and enhances the poly-ADP-ribosyltransferase activity of PARP1. This chain is Poly-ADP-ribosylation-amplifying and CtIP-maintaining micropeptide, found in Homo sapiens (Human).